Consider the following 227-residue polypeptide: Cytochrome c oxidase subunit 2 (227 aa).

Residues 1–14 (MAYPFQLGLQDATS) are Mitochondrial intermembrane-facing. A helical transmembrane segment spans residues 15–45 (PIMEELLHFHDHTLMIVFLISSLVLYIISLM). Residues 46–59 (LTTKLTHTSTMDAQ) are Mitochondrial matrix-facing. Residues 60 to 87 (EVETVWTILPAIILILIALPSLRILYMM) traverse the membrane as a helical segment. Topologically, residues 88 to 227 (DEINNPSLTV…YFETWSAVMV (140 aa)) are mitochondrial intermembrane. Residues His161, Cys196, Glu198, Cys200, His204, and Met207 each contribute to the Cu cation site. Glu198 lines the Mg(2+) pocket. Tyr218 bears the Phosphotyrosine mark.

Belongs to the cytochrome c oxidase subunit 2 family. As to quaternary structure, component of the cytochrome c oxidase (complex IV, CIV), a multisubunit enzyme composed of 14 subunits. The complex is composed of a catalytic core of 3 subunits MT-CO1, MT-CO2 and MT-CO3, encoded in the mitochondrial DNA, and 11 supernumerary subunits COX4I, COX5A, COX5B, COX6A, COX6B, COX6C, COX7A, COX7B, COX7C, COX8 and NDUFA4, which are encoded in the nuclear genome. The complex exists as a monomer or a dimer and forms supercomplexes (SCs) in the inner mitochondrial membrane with NADH-ubiquinone oxidoreductase (complex I, CI) and ubiquinol-cytochrome c oxidoreductase (cytochrome b-c1 complex, complex III, CIII), resulting in different assemblies (supercomplex SCI(1)III(2)IV(1) and megacomplex MCI(2)III(2)IV(2)). Found in a complex with TMEM177, COA6, COX18, COX20, SCO1 and SCO2. Interacts with TMEM177 in a COX20-dependent manner. Interacts with COX20. Interacts with COX16. The cofactor is Cu cation.

It is found in the mitochondrion inner membrane. The catalysed reaction is 4 Fe(II)-[cytochrome c] + O2 + 8 H(+)(in) = 4 Fe(III)-[cytochrome c] + 2 H2O + 4 H(+)(out). Component of the cytochrome c oxidase, the last enzyme in the mitochondrial electron transport chain which drives oxidative phosphorylation. The respiratory chain contains 3 multisubunit complexes succinate dehydrogenase (complex II, CII), ubiquinol-cytochrome c oxidoreductase (cytochrome b-c1 complex, complex III, CIII) and cytochrome c oxidase (complex IV, CIV), that cooperate to transfer electrons derived from NADH and succinate to molecular oxygen, creating an electrochemical gradient over the inner membrane that drives transmembrane transport and the ATP synthase. Cytochrome c oxidase is the component of the respiratory chain that catalyzes the reduction of oxygen to water. Electrons originating from reduced cytochrome c in the intermembrane space (IMS) are transferred via the dinuclear copper A center (CU(A)) of subunit 2 and heme A of subunit 1 to the active site in subunit 1, a binuclear center (BNC) formed by heme A3 and copper B (CU(B)). The BNC reduces molecular oxygen to 2 water molecules using 4 electrons from cytochrome c in the IMS and 4 protons from the mitochondrial matrix. In Lycalopex sechurae (Sechuran desert fox), this protein is Cytochrome c oxidase subunit 2 (MT-CO2).